A 363-amino-acid polypeptide reads, in one-letter code: MNGTSFFGGDGTRLSHYDYDLPAAHIAQRPMEPRDHARLLVSRAQGVEDSRFDQLVEHLQAGDLLVLNDTKVIPARLLGHKPSGGRVEIFLLKPDPQHPPLWRAMTRSNKPLKVGQRVEFGEDFYAELVERQAEGHVLVALHAVGMGLDEAMQHYGQMPLPPYISGSDAQQDKSRYQTVFARRDGAVAAPTAGLHFTDALFERLAAKGVTWCHVTLHVGLGTFQPVRVEDLDAHPMHGEWRQLEADAVAKIQRTKAAGGRVVAVGTTAVRTLESSVDDQGVLQASCGETRLFIRPGYRFKVVDLMLTNFHLPKSTLLMLVAAFVGRSRLRRDYAHAMGKNYRFYSYGDTTLLYPQLEEERGLS.

The protein belongs to the QueA family. Monomer.

It localises to the cytoplasm. It catalyses the reaction 7-aminomethyl-7-carbaguanosine(34) in tRNA + S-adenosyl-L-methionine = epoxyqueuosine(34) in tRNA + adenine + L-methionine + 2 H(+). Its pathway is tRNA modification; tRNA-queuosine biosynthesis. In terms of biological role, transfers and isomerizes the ribose moiety from AdoMet to the 7-aminomethyl group of 7-deazaguanine (preQ1-tRNA) to give epoxyqueuosine (oQ-tRNA). The protein is S-adenosylmethionine:tRNA ribosyltransferase-isomerase of Magnetococcus marinus (strain ATCC BAA-1437 / JCM 17883 / MC-1).